The following is a 459-amino-acid chain: MAFLPPNLKIMFNPRHPPPFLPPPPPSNLPPYTGLRDYLSIFTDPSNEEPFKKEHIENLEEKREKKRKLKISENDERISKSLKAWDPYSNSETTGDPYKTIFVSRISYKTTQQKLEFEFGQFGPIKSLFLVKDSNNPEKHTGYAFIEFERERDMKAAYKQADGMKIDDRRIVVDIERGRVIKNWKPRKFGGGLGNTRAGGVDVNQTFSGREMSESREKEKEREKEKEKEKERMEKMKKRDGGLSSNGNRSNGISSGSGGSGGDRGDRGDRDRGDRGDRSDRSDRDRERGRGDRDHRGSGGERERERDQRDRGGDRGGDRGDRSDRGRSDRGDRGDRSDRGRDDRERGRDDRGDRGRDDRRGGSDRDRDRGSRDDRGDRDDRSDRGRDDRRGGSDRDHRIDERRRDQRDYGSISDAHFDHFQYQPQQHHHHQQNHQSHHNQPHPERVNRDYSMISNENGF.

Residues 99–178 (KTIFVSRISY…RRIVVDIERG (80 aa)) enclose the RRM domain. The interval 185-459 (KPRKFGGGLG…YSMISNENGF (275 aa)) is disordered. Over residues 211–241 (EMSESREKEKEREKEKEKEKERMEKMKKRDG) the composition is skewed to basic and acidic residues. Residues 242–254 (GLSSNGNRSNGIS) are compositionally biased toward low complexity. Residues 263-408 (DRGDRGDRDR…IDERRRDQRD (146 aa)) show a composition bias toward basic and acidic residues. Positions 426-440 (QHHHHQQNHQSHHNQ) are enriched in basic residues.

It localises to the nucleus. Mediates the splicing of pre-mRNA by binding to the stem loop I region of U1-snRNA. The protein is U1 small nuclear ribonucleoprotein 70 kDa (snrnp70) of Dictyostelium discoideum (Social amoeba).